We begin with the raw amino-acid sequence, 139 residues long: Small ribosomal subunit protein uS11 (139 aa).

The tract at residues Met-1–Ile-33 is disordered. Over residues Lys-14–Lys-23 the composition is skewed to basic residues.

Belongs to the universal ribosomal protein uS11 family. As to quaternary structure, part of the 30S ribosomal subunit. Interacts with proteins S7 and S18. Binds to IF-3.

Functionally, located on the platform of the 30S subunit, it bridges several disparate RNA helices of the 16S rRNA. Forms part of the Shine-Dalgarno cleft in the 70S ribosome. The protein is Small ribosomal subunit protein uS11 of Mycobacterium bovis (strain ATCC BAA-935 / AF2122/97).